Here is a 268-residue protein sequence, read N- to C-terminus: MDDSTLRRKYPHHEWHAVNEGDSGAFVYQLTGGPEPQPELYAKIAPRAPENSAFDLSGEADRLEWLHRHGIPVPRVVERGADDTAAWLVTEAVPGVAAAEEWPEHQRFAVVEAMAELARALHELPVEDCPSDRRLDAAVAEARRNVAEGLVDLDDLQEERAGWTGDQLLAELDRTRPEKEDLVVCHGDLCPNNVLLDPGTCRVTGVIDVGRLGVADRHADIALAARELEIDEDPWFGPAYAERFLERYGAHRVDKEKLAFYQLLDEFF.

Residue D188 is the Proton acceptor of the active site.

Belongs to the aminoglycoside phosphotransferase family.

The catalysed reaction is kanamycin A + ATP = kanamycin 3'-phosphate + ADP + H(+). Its function is as follows. Resistance to kanamycin and structurally-related aminoglycosides, including amikacin. The protein is Aminoglycoside 3'-phosphotransferase (aph) of Streptomyces fradiae (Streptomyces roseoflavus).